The following is a 260-amino-acid chain: Lys-63-specific deubiquitinase BRCC36 (260 aa).

Positions 6 to 149 constitute an MPN domain; it reads VHLESDAFLV…YTCFQSVQAQ (144 aa). The Zn(2+) site is built by H92, H94, and D105. The JAMM motif motif lies at 92–105; sequence HSHPHITVWPSHVD.

It belongs to the peptidase M67A family. BRCC36 subfamily. As to quaternary structure, component of the BRCA1-A complex, at least composed of brca1, bard1, uimc1/rap80, abraxas1, brcc3/brcc36, babam2 and babam1/nba1. In the BRCA1-A complex, interacts directly with abraxas1 and babam2. Component of the BRISC complex, at least composed of abraxas2, brcc3/brcc36, babam2 and babam1/nba1. Within the complex, interacts directly with abraxas2. Both the BRCA1-A complex and the BRISC complex bind polyubiquitin. Requires Zn(2+) as cofactor.

The protein localises to the nucleus. It localises to the cytoplasm. Its subcellular location is the cytoskeleton. It is found in the spindle pole. Its function is as follows. Metalloprotease that specifically cleaves 'Lys-63'-linked polyubiquitin chains. Does not have activity toward 'Lys-48'-linked polyubiquitin chains. Component of the BRCA1-A complex, a complex that specifically recognizes 'Lys-63'-linked ubiquitinated histones H2A and H2AX at DNA lesions sites, leading to target the brca1-bard1 heterodimer to sites of DNA damage at double-strand breaks (DSBs). In the BRCA1-A complex, it specifically removes 'Lys-63'-linked ubiquitin on histones H2A and H2AX, antagonizing the rnf8-dependent ubiquitination at double-strand breaks (DSBs). Catalytic subunit of the BRISC complex, a multiprotein complex that specifically cleaves 'Lys-63'-linked ubiquitin in various substrates. Mediates the specific 'Lys-63'-specific deubiquitination associated with the COP9 signalosome complex (CSN), via the interaction of the BRISC complex with the CSN complex. The BRISC complex is required for normal mitotic spindle assembly and microtubule attachment to kinetochores via its role in deubiquitinating numa1. Plays a role in interferon signaling via its role in the deubiquitination of the interferon receptor ifnar1; deubiquitination increases ifnar1 activity by enhancing its stability and cell surface expression. Acts as a regulator of the NLRP3 inflammasome by mediating deubiquitination of nlrp3. Down-regulates the response to bacterial lipopolysaccharide (LPS) via its role in ifnar1 deubiquitination. This is Lys-63-specific deubiquitinase BRCC36 (brcc3) from Salmo salar (Atlantic salmon).